Reading from the N-terminus, the 340-residue chain is Ketol-acid reductoisomerase (NADP(+)) (340 aa).

In terms of domain architecture, KARI N-terminal Rossmann spans 1-183 (MAITVYYDKD…GGGRTGIIET (183 aa)). NADP(+) is bound by residues 26–29 (FGSQ), Ser-54, and 84–87 (DEFQ). The active site involves His-109. Position 135 (Gly-135) interacts with NADP(+). A KARI C-terminal knotted domain is found at 184-329 (TFKAETETDL…EKLRGMMPWI (146 aa)). 4 residues coordinate Mg(2+): Asp-192, Glu-196, Glu-228, and Glu-232. Ser-253 provides a ligand contact to substrate.

It belongs to the ketol-acid reductoisomerase family. The cofactor is Mg(2+).

It carries out the reaction (2R)-2,3-dihydroxy-3-methylbutanoate + NADP(+) = (2S)-2-acetolactate + NADPH + H(+). It catalyses the reaction (2R,3R)-2,3-dihydroxy-3-methylpentanoate + NADP(+) = (S)-2-ethyl-2-hydroxy-3-oxobutanoate + NADPH + H(+). It functions in the pathway amino-acid biosynthesis; L-isoleucine biosynthesis; L-isoleucine from 2-oxobutanoate: step 2/4. It participates in amino-acid biosynthesis; L-valine biosynthesis; L-valine from pyruvate: step 2/4. Its function is as follows. Involved in the biosynthesis of branched-chain amino acids (BCAA). Catalyzes an alkyl-migration followed by a ketol-acid reduction of (S)-2-acetolactate (S2AL) to yield (R)-2,3-dihydroxy-isovalerate. In the isomerase reaction, S2AL is rearranged via a Mg-dependent methyl migration to produce 3-hydroxy-3-methyl-2-ketobutyrate (HMKB). In the reductase reaction, this 2-ketoacid undergoes a metal-dependent reduction by NADPH to yield (R)-2,3-dihydroxy-isovalerate. This Campylobacter fetus subsp. fetus (strain 82-40) protein is Ketol-acid reductoisomerase (NADP(+)).